A 649-amino-acid chain; its full sequence is Protein teflon (649 aa).

The segment at Leu33–His56 adopts a C2H2-type 1 zinc-finger fold. The tract at residues Glu78–Gln126 is disordered. Positions Ser88 to Ser104 are enriched in low complexity. 2 consecutive C2H2-type zinc fingers follow at residues Tyr599–His621 and Phe625–His648.

This sequence belongs to the Teflon family. Expressed at a low level in a variety of tissues, highest expression is in testis.

It is found in the nucleus. The protein localises to the chromosome. In terms of biological role, specifically required in males for proper segregation of autosomal bivalents at meiosis I. Expression is required in the male germ line prior to spermatocyte stage S4. May have a role as a bridging molecule maintaining adhesion to hold autosome bivalents together via heterochromatic connections. The sequence is that of Protein teflon from Drosophila melanogaster (Fruit fly).